Consider the following 62-residue polypeptide: Alkaline proteinase (62 aa).

In terms of domain architecture, Peptidase S8 spans G1–S62. D21 (charge relay system) is an active-site residue.

The protein resides in the secreted. Its activity is regulated as follows. Inhibited by phenylmethanesulfonyl fluoride (PMSF) and chymostatin (CST), but not by Bowman-Birk type trypsin-chymotrypsin inhibitor (BBI). Its function is as follows. Serine protease. May be involved in the invasion of grains and hydrolysis of grain proteins. This chain is Alkaline proteinase, found in Fusarium culmorum.